The following is a 137-amino-acid chain: ATP synthase epsilon chain (137 aa).

The protein belongs to the ATPase epsilon chain family. F-type ATPases have 2 components, CF(1) - the catalytic core - and CF(0) - the membrane proton channel. CF(1) has five subunits: alpha(3), beta(3), gamma(1), delta(1), epsilon(1). CF(0) has three main subunits: a, b and c.

Its subcellular location is the cell membrane. In terms of biological role, produces ATP from ADP in the presence of a proton gradient across the membrane. This chain is ATP synthase epsilon chain, found in Streptococcus agalactiae serotype III (strain NEM316).